The following is a 155-amino-acid chain: Mitochondrial import protein 1 (155 aa).

This sequence belongs to the MIM1 family.

The protein resides in the mitochondrion outer membrane. Functionally, required for the assembly of the TOM (translocase of outer membrane) receptor complex, which is responsible for the recognition and translocation of cytosolically synthesized mitochondrial preproteins. The chain is Mitochondrial import protein 1 from Eremothecium gossypii (strain ATCC 10895 / CBS 109.51 / FGSC 9923 / NRRL Y-1056) (Yeast).